The primary structure comprises 195 residues: Small ribosomal subunit protein uS10c (195 aa).

The N-terminal 59 residues, 1 to 59 (MATSSISAALLSPLTLRNASSSSTKQDFSTLSSLNLRRTLTPTLQSGHTLSNSSNFATF), are a transit peptide targeting the chloroplast.

This sequence belongs to the universal ribosomal protein uS10 family. In terms of assembly, component of the chloroplast small ribosomal subunit (SSU). Mature 70S chloroplast ribosomes of higher plants consist of a small (30S) and a large (50S) subunit. The 30S small subunit contains 1 molecule of ribosomal RNA (16S rRNA) and 24 different proteins. The 50S large subunit contains 3 rRNA molecules (23S, 5S and 4.5S rRNA) and 33 different proteins.

It is found in the plastid. The protein localises to the chloroplast. Functionally, component of the chloroplast ribosome (chloro-ribosome), a dedicated translation machinery responsible for the synthesis of chloroplast genome-encoded proteins, including proteins of the transcription and translation machinery and components of the photosynthetic apparatus. This is Small ribosomal subunit protein uS10c (RPS10) from Spinacia oleracea (Spinach).